A 477-amino-acid polypeptide reads, in one-letter code: Cytochrome c oxidase subunit 1 (477 aa).

Residues 16–36 (VGTMYLMLGMWSGFGGLNLSW) traverse the membrane as a helical segment. Positions 41 and 46 each coordinate Ca(2+). Fe(II)-heme a is bound at residue H62. Helical transmembrane passes span 64-84 (IMMI…NWLL), 101-121 (FSFW…FIDY), 149-171 (ILGL…VTFL), 185-205 (LFVW…PVLA), 236-256 (LFWF…FGLV), and 269-289 (VFGS…GFIV). H242 provides a ligand contact to Cu cation. A cross-link (1'-histidyl-3'-tyrosine (His-Tyr)) is located at residues 242-246 (HPEVY). Y246 is a binding site for O2. Cu cation-binding residues include H292 and H293. 2 helical membrane-spanning segments follow: residues 309 to 329 (AVTM…IATI) and 340 to 360 (TLWV…GVIL). 2 residues coordinate Mg(2+): H370 and D371. A heme a3-binding site is contributed by H378. Fe(II)-heme a is bound at residue H380. The next 2 helical transmembrane spans lie at 382 to 402 (VLSM…FPFF) and 416 to 436 (FFLT…LGLG). P443 contributes to the Ca(2+) binding site. The helical transmembrane segment at 455 to 475 (WSTIGCAMVMVSVSLFIHMQW) threads the bilayer.

Belongs to the heme-copper respiratory oxidase family. As to quaternary structure, component of the cytochrome c oxidase (complex IV, CIV), a multisubunit enzyme composed of a catalytic core of 3 subunits and several supernumerary subunits. The complex exists as a monomer or a dimer and forms supercomplexes (SCs) in the inner mitochondrial membrane with ubiquinol-cytochrome c oxidoreductase (cytochrome b-c1 complex, complex III, CIII). It depends on heme as a cofactor. Cu cation is required as a cofactor.

It localises to the mitochondrion inner membrane. It catalyses the reaction 4 Fe(II)-[cytochrome c] + O2 + 8 H(+)(in) = 4 Fe(III)-[cytochrome c] + 2 H2O + 4 H(+)(out). Its pathway is energy metabolism; oxidative phosphorylation. Its function is as follows. Component of the cytochrome c oxidase, the last enzyme in the mitochondrial electron transport chain which drives oxidative phosphorylation. The respiratory chain contains 3 multisubunit complexes succinate dehydrogenase (complex II, CII), ubiquinol-cytochrome c oxidoreductase (cytochrome b-c1 complex, complex III, CIII) and cytochrome c oxidase (complex IV, CIV), that cooperate to transfer electrons derived from NADH and succinate to molecular oxygen, creating an electrochemical gradient over the inner membrane that drives transmembrane transport and the ATP synthase. Cytochrome c oxidase is the component of the respiratory chain that catalyzes the reduction of oxygen to water. Electrons originating from reduced cytochrome c in the intermembrane space (IMS) are transferred via the dinuclear copper A center (CU(A)) of subunit 2 and heme A of subunit 1 to the active site in subunit 1, a binuclear center (BNC) formed by heme A3 and copper B (CU(B)). The BNC reduces molecular oxygen to 2 water molecules using 4 electrons from cytochrome c in the IMS and 4 protons from the mitochondrial matrix. This is Cytochrome c oxidase subunit 1 (COI) from Pecten maximus (King scallop).